Consider the following 379-residue polypeptide: Anhydro-N-acetylmuramic acid kinase (379 aa).

Residue 9–16 (GTSVDGID) participates in ATP binding.

This sequence belongs to the anhydro-N-acetylmuramic acid kinase family.

The catalysed reaction is 1,6-anhydro-N-acetyl-beta-muramate + ATP + H2O = N-acetyl-D-muramate 6-phosphate + ADP + H(+). Its pathway is amino-sugar metabolism; 1,6-anhydro-N-acetylmuramate degradation. It participates in cell wall biogenesis; peptidoglycan recycling. Functionally, catalyzes the specific phosphorylation of 1,6-anhydro-N-acetylmuramic acid (anhMurNAc) with the simultaneous cleavage of the 1,6-anhydro ring, generating MurNAc-6-P. Is required for the utilization of anhMurNAc either imported from the medium or derived from its own cell wall murein, and thus plays a role in cell wall recycling. The polypeptide is Anhydro-N-acetylmuramic acid kinase (Picosynechococcus sp. (strain ATCC 27264 / PCC 7002 / PR-6) (Agmenellum quadruplicatum)).